Reading from the N-terminus, the 228-residue chain is Protein ULTRAPETALA 2 (228 aa).

The 108-residue stretch at 14 to 121 (EELQEISGVH…NKALKNSNVS (108 aa)) folds into the SAND domain.

Expressed in influorescence, pollen and siliques, with a higher expression in influorescence.

The protein resides in the cytoplasm. The protein localises to the nucleus. Its function is as follows. Putative transcription factor that acts as a key negative regulator of cell accumulation in shoot and floral meristems. Negatively regulates the size of the WUSCHEL (WUS)-expressing organizing center in inflorescence meristems. May act by down-regulating expression of WUS. Can compensate for mutant ULT1 protein when overexpressed. The chain is Protein ULTRAPETALA 2 (ULT2) from Arabidopsis thaliana (Mouse-ear cress).